Reading from the N-terminus, the 217-residue chain is Vesicle-associated membrane protein 723 (217 aa).

The Cytoplasmic segment spans residues 1-192 (MAQQSLFYSF…KWFQNMKIKL (192 aa)). The region spanning 10 to 114 (FIARGTVILV…SLNKEFGSNL (105 aa)) is the Longin domain. Residues 130–186 (NLAKAKAQVSEVKSLMMENIEKVLARGVICEMLGSSESQPQAFYIKRTQMKRKKWFQ) form the v-SNARE coiled-coil homology domain. Residues 193–213 (IVLAIIIALILIIILSVCGGF) form a helical; Anchor for type IV membrane protein membrane-spanning segment. Residues 214-217 (NCGK) are Vesicular-facing.

Belongs to the synaptobrevin family. As to expression, highly expressed in stems and roots. Detected in flowers and leaves.

It is found in the endoplasmic reticulum membrane. In terms of biological role, involved in the targeting and/or fusion of transport vesicles to their target membrane. This Arabidopsis thaliana (Mouse-ear cress) protein is Vesicle-associated membrane protein 723.